A 520-amino-acid chain; its full sequence is Glutamyl-tRNA(Gln) amidotransferase subunit A (520 aa).

Residues Lys80 and Ser155 each act as charge relay system in the active site. Ser179 serves as the catalytic Acyl-ester intermediate.

Belongs to the amidase family. GatA subfamily. As to quaternary structure, heterotrimer of A, B and C subunits.

It catalyses the reaction L-glutamyl-tRNA(Gln) + L-glutamine + ATP + H2O = L-glutaminyl-tRNA(Gln) + L-glutamate + ADP + phosphate + H(+). Its function is as follows. Allows the formation of correctly charged Gln-tRNA(Gln) through the transamidation of misacylated Glu-tRNA(Gln) in organisms which lack glutaminyl-tRNA synthetase. The reaction takes place in the presence of glutamine and ATP through an activated gamma-phospho-Glu-tRNA(Gln). This Renibacterium salmoninarum (strain ATCC 33209 / DSM 20767 / JCM 11484 / NBRC 15589 / NCIMB 2235) protein is Glutamyl-tRNA(Gln) amidotransferase subunit A.